A 385-amino-acid chain; its full sequence is tRNA pseudouridine synthase D (385 aa).

The Nucleophile role is filled by Asp-65. One can recognise a TRUD domain in the interval Gly-143–Lys-345.

The protein belongs to the pseudouridine synthase TruD family.

It catalyses the reaction uridine(13) in tRNA = pseudouridine(13) in tRNA. Responsible for synthesis of pseudouridine from uracil-13 in transfer RNAs. This is tRNA pseudouridine synthase D from Aquifex aeolicus (strain VF5).